The primary structure comprises 342 residues: MEKLTITRPDDWHLHLRDGAALKAVLPHTVRQFARAIVMPNLKPPVRSVADAAAYRERILAAIPAGGQFEPLMTLYLTDNTNPEEIIAAKASQFVKAVKYYPAGATTNSDFGVTDIHRCDAVLAAMEQVDLPLLLHGEVTDSNIDIFDREKVFIEKYLIPLREKFPRLRVVLEHITTSDAVQFVLSANNIAATITPQHLLFSRNALFKGGICPHFYCLPILKREEHRLSLLHAATSGNPKFFLGTDSAPHARNSKESLCGCAGCYSALHAMELYAEAFESVNSLDKLEAFASFYGPDFYQLPRNTAQITLMKNPWRIPAELPFPESGLVPLRAGEEITWQMV.

Zn(2+) contacts are provided by His13 and His15. Residues 15-17 (HLR) and Asn41 contribute to the substrate site. The Zn(2+) site is built by Lys99, His136, and His174. Lys99 is modified (N6-carboxylysine). His136 provides a ligand contact to substrate. Leu218 contributes to the substrate binding site. Asp246 is a Zn(2+) binding site. Residue Asp246 is part of the active site. Positions 250 and 262 each coordinate substrate.

It belongs to the metallo-dependent hydrolases superfamily. DHOase family. Class II DHOase subfamily. In terms of assembly, homodimer. It depends on Zn(2+) as a cofactor.

The enzyme catalyses (S)-dihydroorotate + H2O = N-carbamoyl-L-aspartate + H(+). It functions in the pathway pyrimidine metabolism; UMP biosynthesis via de novo pathway; (S)-dihydroorotate from bicarbonate: step 3/3. Functionally, catalyzes the reversible cyclization of carbamoyl aspartate to dihydroorotate. The sequence is that of Dihydroorotase from Synechocystis sp. (strain ATCC 27184 / PCC 6803 / Kazusa).